Consider the following 310-residue polypeptide: Manganese ABC transporter substrate-binding lipoprotein PsaA (310 aa).

Residues 1-20 (MKKIASVLALFVALLFGLLA) form the signal peptide. Cysteine 21 carries N-palmitoyl cysteine lipidation. Cysteine 21 carries S-diacylglycerol cysteine lipidation. Residues histidine 68, histidine 140, glutamate 206, and aspartate 281 each contribute to the Mn(2+) site.

Belongs to the bacterial solute-binding protein 9 family. Lipoprotein receptor antigen (Lrai) subfamily.

The protein resides in the cell membrane. Its function is as follows. Part of the ATP-binding cassette (ABC) transport system PsaABC involved in manganese import. Binds manganese with high affinity and specificity and delivers it to the membrane permease for translocation into the cytoplasm. Also acts as an adhesin which is involved on adherence to extracellular matrix. The protein is Manganese ABC transporter substrate-binding lipoprotein PsaA of Streptococcus pneumoniae.